Here is a 237-residue protein sequence, read N- to C-terminus: Class B acid phosphatase (237 aa).

The first 23 residues, 1 to 23 (MKKITLALSAVCLLFTLNHSANA), serve as a signal peptide directing secretion. Catalysis depends on D69, which acts as the Nucleophile. Residues D69 and D71 each coordinate Mg(2+). Residue D71 is the Proton donor of the active site. Substrate-binding positions include 137-138 (TG) and K177. Mg(2+) is bound at residue D192.

This sequence belongs to the class B bacterial acid phosphatase family. Homotetramer. The cofactor is Mg(2+).

The protein resides in the periplasm. It catalyses the reaction a phosphate monoester + H2O = an alcohol + phosphate. Its activity is regulated as follows. Nucleosides, and particularly 2'-deoxyribonucleosides, are potent inhibitors of the phosphatase activity. The phosphatase activity is also inhibited by inorganic phosphate and EDTA in vitro. Functionally, dephosphorylates several organic phosphate monoesters such as 3'-UMP, 5'-UMP and pNPP. Also has a phosphotransferase activity catalyzing the transfer of low-energy phosphate groups from organic phosphate monoesters to free hydroxyl groups of various organic compounds such as the 2'-, 3-, or 5'-hydroxyls of nucleosides and nucleotides. Also displays significant phosphomutase activity since it is able to catalyze the transfer of the phosphate group of 3'-AMP from the 3'-position both to the 2'- and 5'-positions. One of the physiological functions of the phosphohydrolytic activity of the enzyme is believed to be the scavenging of organic phosphate esters that otherwise cannot pass the cytoplasmic membrane. The polypeptide is Class B acid phosphatase (aphA) (Salmonella typhimurium (strain LT2 / SGSC1412 / ATCC 700720)).